A 244-amino-acid polypeptide reads, in one-letter code: Uridylate kinase (244 aa).

Position 17 to 20 (17 to 20 (KLSG)) interacts with ATP. Glycine 59 provides a ligand contact to UMP. ATP-binding residues include glycine 60 and arginine 64. Residues aspartate 79 and 140-147 (TGNPFFTT) each bind UMP. Positions 167, 173, and 176 each coordinate ATP.

It belongs to the UMP kinase family. Homohexamer.

It is found in the cytoplasm. It catalyses the reaction UMP + ATP = UDP + ADP. It participates in pyrimidine metabolism; CTP biosynthesis via de novo pathway; UDP from UMP (UMPK route): step 1/1. Its activity is regulated as follows. Inhibited by UTP. Functionally, catalyzes the reversible phosphorylation of UMP to UDP. The protein is Uridylate kinase of Hahella chejuensis (strain KCTC 2396).